Here is a 328-residue protein sequence, read N- to C-terminus: Malate dehydrogenase (328 aa).

11–17 (GAAGQIG) contributes to the NAD(+) binding site. Substrate is bound by residues arginine 94 and arginine 100. Residues asparagine 107, glutamine 114, and 131 to 133 (VGN) each bind NAD(+). Residues asparagine 133 and arginine 164 each contribute to the substrate site. The Proton acceptor role is filled by histidine 189.

This sequence belongs to the LDH/MDH superfamily. MDH type 2 family.

The catalysed reaction is (S)-malate + NAD(+) = oxaloacetate + NADH + H(+). Its function is as follows. Catalyzes the reversible oxidation of malate to oxaloacetate. This is Malate dehydrogenase from Stenotrophomonas maltophilia (strain R551-3).